The following is a 955-amino-acid chain: UPF0182 protein tll1193 (955 aa).

The next 9 membrane-spanning stretches (helical) occupy residues 6–26, 53–73, 98–118, 163–183, 186–206, 240–260, 280–300, 324–344, and 354–374; these read VVPLMPPWLRWLCGLVLAIAL, WSVQALLFLAVAGVSQLFYGC, GLGLWQLLLCAGSLNWLLIVA, WLLGLSLVAVILGLWLPVGLF, LGILLSLAMGAIASLSWPVVL, LWLVNLSVVGLGGTTLGYLLA, LQGLSAFVFATVALSFWLERY, LYGWLSASAFGVACLLAWSAI, and GPIAPGLFGFTLGYLGVILIV.

The protein belongs to the UPF0182 family.

The protein resides in the cell membrane. The sequence is that of UPF0182 protein tll1193 from Thermosynechococcus vestitus (strain NIES-2133 / IAM M-273 / BP-1).